Reading from the N-terminus, the 395-residue chain is Receptor-like cytoplasmic kinase 176 (395 aa).

Residues 1–45 are disordered; that stretch reads MGNCWGAKISSESPCRSASSPSGGTSKYASNSSVSAASVPPTPRS. Low complexity-rich tracts occupy residues 10 to 22 and 29 to 39; these read SSESPCRSASSPS and ASNSSVSAASV. Positions 70-355 constitute a Protein kinase domain; sequence FRPDSVLGEG…EQVVAVLEQL (286 aa). Residues 76-84 and lysine 108 contribute to the ATP site; that span reads LGEGGFGSV. Aspartate 205 serves as the catalytic Proton acceptor. The interval 359–395 is disordered; the sequence is KETGANPQLQKKSSSKNAGSNGSKPSSKGKPANARLV. The span at 369–395 shows a compositional bias: low complexity; it reads KKSSSKNAGSNGSKPSSKGKPANARLV.

Belongs to the protein kinase superfamily. Ser/Thr protein kinase family. In terms of assembly, interacts with CERK1.

The catalysed reaction is L-seryl-[protein] + ATP = O-phospho-L-seryl-[protein] + ADP + H(+). It carries out the reaction L-threonyl-[protein] + ATP = O-phospho-L-threonyl-[protein] + ADP + H(+). Functions downstream of CERK1 in the microbial peptidoglycans (PGNs) and fungal chitin signaling pathways that mediate innate immunity. Participates in the activation of defense genes during response to PGN and chitin. This is Receptor-like cytoplasmic kinase 176 from Oryza sativa subsp. japonica (Rice).